A 334-amino-acid chain; its full sequence is Petrobactin import system permease protein FatD (334 aa).

Transmembrane regions (helical) follow at residues 24–44, 64–84, 98–118, 119–139, 152–172, 197–217, 234–254, 277–297, and 304–324; these read FIIAIIVVIILGIISLFTGVY, TVALMLTGAAMAMAGLVMQLI, IEWSSLGLLFVYLLFPAPTLV, QRMTGAIIFSFIGTMIFFLFL, IIGLMLGAVISAVSTFLGLLF, LWLIVIVTLLIFMYANRLTLA, IVLFGTALISVAVGIVAAVIG, SNLPWVCVIGMGTITACDIIS, and FELPVSLILASVGAVVFITIL.

This sequence belongs to the binding-protein-dependent transport system permease family. FecCD subfamily. The complex is composed of two ATP-binding proteins (FatE), two transmembrane proteins (FatC and FatD) and a solute-binding protein (FpuA).

It is found in the cell membrane. Part of an ABC transporter complex involved in ferric-petrobactin uptake. Probably responsible for the translocation of the substrate across the membrane. The sequence is that of Petrobactin import system permease protein FatD from Bacillus anthracis.